A 238-amino-acid polypeptide reads, in one-letter code: Probable transcriptional regulatory protein VS_II1504 (238 aa).

It belongs to the TACO1 family.

It is found in the cytoplasm. In Vibrio atlanticus (strain LGP32) (Vibrio splendidus (strain Mel32)), this protein is Probable transcriptional regulatory protein VS_II1504.